The primary structure comprises 269 residues: E3 ubiquitin-protein ligase complex slx8-rfp subunit slx8 (269 aa).

The span at Met-1–Asn-10 shows a compositional bias: basic and acidic residues. Disordered regions lie at residues Met-1–Ala-75 and Pro-166–Pro-196. Polar residues predominate over residues Pro-60–Leu-70. Residues Cys-206–Arg-247 form an RING-type zinc finger.

In terms of assembly, part of an E3 ubiquitin complex including rfp1, rfp2 and slx8. Interacts with rfp1 and rfp2.

It is found in the nucleus. It catalyses the reaction S-ubiquitinyl-[E2 ubiquitin-conjugating enzyme]-L-cysteine + [acceptor protein]-L-lysine = [E2 ubiquitin-conjugating enzyme]-L-cysteine + N(6)-ubiquitinyl-[acceptor protein]-L-lysine.. It functions in the pathway protein modification; protein ubiquitination. Its function is as follows. Mediates ubiquitination and subsequent desumoylation/degradation of sumoylated proteins and proteins containing SUMO-like domains. Acts as a critical suppressor of gross chromosomal rearrangements (GCRs) during normal cell cycle progression. Involved in stabilizing, restarting or resolving transiently stalled replication forks. Prevents accumulation of DNA damage during cell cycle progression. The sequence is that of E3 ubiquitin-protein ligase complex slx8-rfp subunit slx8 (slx8) from Schizosaccharomyces pombe (strain 972 / ATCC 24843) (Fission yeast).